The primary structure comprises 116 residues: Propanediol dehydratase-reactivating factor small subunit (116 aa).

Glutamate 31 provides a ligand contact to Mg(2+).

This sequence belongs to the DdrB/PduH family. In terms of assembly, forms a heterotetramer PduG(2)/PduH(2). Mg(2+) is required as a cofactor.

The protein resides in the bacterial microcompartment. It catalyses the reaction ATP + H2O = ADP + phosphate + H(+). The protein operates within polyol metabolism; 1,2-propanediol degradation. Its function is as follows. Small subunit of the propanediol dehydratase-reactivating factor (DDR), which reactivates suicidally inhibited adenosylcobalamin-dependent propanediol dehydratase (diol dehydratase, DDH) found in the bacterial microcompartment (BMC) dedicated to 1,2-propanediol (1,2-PD) degradation. Reactivates inactivated DDH in the presence of ATP, Mg(2+) and free adenosylcobalamin (AdoCbl), by mediating the exchange of the tightly bound damaged cofactor AdoCbl for a free intact one. Functionally, expression of a cosmid containing the full 21-gene pdu operon in E.coli allows E.coli to grow on 1,2-propanediol (1,2-PD) with the appearance of bacterial microcompartments (BMC) in its cytoplasm. The 1,2-PD-specific bacterial microcompartment (BMC) concentrates low levels of 1,2-PD catabolic enzymes, concentrates volatile reaction intermediates thus enhancing pathway flux and keeps the level of toxic, mutagenic propionaldehyde low. This is Propanediol dehydratase-reactivating factor small subunit from Citrobacter freundii.